Here is a 1171-residue protein sequence, read N- to C-terminus: DNA-directed RNA polymerase subunit beta (1171 aa).

This sequence belongs to the RNA polymerase beta chain family. In terms of assembly, the RNAP catalytic core consists of 2 alpha, 1 beta, 1 beta' and 1 omega subunit. When a sigma factor is associated with the core the holoenzyme is formed, which can initiate transcription.

It carries out the reaction RNA(n) + a ribonucleoside 5'-triphosphate = RNA(n+1) + diphosphate. Its function is as follows. DNA-dependent RNA polymerase catalyzes the transcription of DNA into RNA using the four ribonucleoside triphosphates as substrates. This is DNA-directed RNA polymerase subunit beta from Kineococcus radiotolerans (strain ATCC BAA-149 / DSM 14245 / SRS30216).